Consider the following 355-residue polypeptide: UPF0324 membrane protein PA5383 (355 aa).

The next 10 membrane-spanning stretches (helical) occupy residues 20 to 37 (IPGL…ILLG), 44 to 66 (HNGI…TLYP), 71 to 93 (GSAA…LYGL), 100 to 122 (IAGV…FGLA), 137 to 159 (TLLI…EPVV), 166 to 188 (VAVA…PALF), 233 to 255 (AVIA…SAWL), 275 to 297 (WFAV…PALV), 307 to 324 (LLAM…LSAI), and 331 to 353 (PLLL…TRLA).

This sequence belongs to the UPF0324 family.

The protein localises to the cell membrane. This is UPF0324 membrane protein PA5383 from Pseudomonas aeruginosa (strain ATCC 15692 / DSM 22644 / CIP 104116 / JCM 14847 / LMG 12228 / 1C / PRS 101 / PAO1).